The primary structure comprises 273 residues: Dermonecrotic toxin LspaSicTox-alphaIA2iv (273 aa).

H5 is a catalytic residue. E25 and D27 together coordinate Mg(2+). H41 (nucleophile) is an active-site residue. 2 cysteine pairs are disulfide-bonded: C45–C51 and C47–C190. D85 contributes to the Mg(2+) binding site.

It belongs to the arthropod phospholipase D family. Class II subfamily. Mg(2+) is required as a cofactor. Expressed by the venom gland.

The protein localises to the secreted. The catalysed reaction is an N-(acyl)-sphingosylphosphocholine = an N-(acyl)-sphingosyl-1,3-cyclic phosphate + choline. The enzyme catalyses an N-(acyl)-sphingosylphosphoethanolamine = an N-(acyl)-sphingosyl-1,3-cyclic phosphate + ethanolamine. It carries out the reaction a 1-acyl-sn-glycero-3-phosphocholine = a 1-acyl-sn-glycero-2,3-cyclic phosphate + choline. It catalyses the reaction a 1-acyl-sn-glycero-3-phosphoethanolamine = a 1-acyl-sn-glycero-2,3-cyclic phosphate + ethanolamine. In terms of biological role, dermonecrotic toxins cleave the phosphodiester linkage between the phosphate and headgroup of certain phospholipids (sphingolipid and lysolipid substrates), forming an alcohol (often choline) and a cyclic phosphate. This toxin acts on sphingomyelin (SM). It may also act on ceramide phosphoethanolamine (CPE), lysophosphatidylcholine (LPC) and lysophosphatidylethanolamine (LPE), but not on lysophosphatidylserine (LPS), and lysophosphatidylglycerol (LPG). It acts by transphosphatidylation, releasing exclusively cyclic phosphate products as second products. Induces dermonecrosis, hemolysis, increased vascular permeability, edema, inflammatory response, and platelet aggregation. The protein is Dermonecrotic toxin LspaSicTox-alphaIA2iv of Loxosceles spadicea (Recluse spider).